Consider the following 836-residue polypeptide: ATP-binding cassette sub-family B member 6 (836 aa).

Over 1–26 the chain is Lumenal; it reads MVTVGNYCEAEGPAGPAWTQNGLSPC. The interval 1–205 is required for the lysosomal targeting; that stretch reads MVTVGNYCEA…SGGLFILGLW (205 aa). The segment at 1–236 is required for ATPase activity; sequence MVTVGNYCEA…RNQGRSTDPR (236 aa). A disulfide bond links C8 and C26. A helical membrane pass occupies residues 27–47; the sequence is FFYTLVPSTLMTLGVLALVLV. The Cytoplasmic portion of the chain corresponds to 48–72; it reads LPCRRREVPAGTEELSWAAGPRVAP. The helical transmembrane segment at 73 to 93 threads the bilayer; the sequence is YALQLSLAILQMALPLASLAG. Topologically, residues 94-106 are lumenal; sequence RVGTARGVRLPGY. The helical transmembrane segment at 107-127 threads the bilayer; it reads LLLASVLESLASACGLWLLVV. At 128–147 the chain is on the cytoplasmic side; the sequence is ERSQARQSLAMGVWMKFRHS. A helical membrane pass occupies residues 148–168; that stretch reads LGLLLLWTVTFAAENLVLVSW. Topologically, residues 169–185 are lumenal; it reads NSPQWWWSRADLGQQVQ. The helical transmembrane segment at 186-206 threads the bilayer; that stretch reads FGLWVLRYMTSGGLFILGLWA. Residues 207 to 264 are Cytoplasmic-facing; the sequence is PGLRPQSYTLHVNEEDQDGGRNQGRSTDPRSTWRDLGRKLRLLSGYLWPRGSPSLQLT. The helical transmembrane segment at 265–285 threads the bilayer; the sequence is VLLCMGLMGLDRALNVLVPIF. An ABC transmembrane type-1 domain is found at 265-556; that stretch reads VLLCMGLMGL…FGTYYRMIQT (292 aa). Residues 286–305 lie on the Lumenal side of the membrane; it reads YRDIVNLLTSKAPWSSLAWT. Residues 306 to 326 form a helical membrane-spanning segment; it reads VTTYVFLKFLQGGGTGSTGFV. At 327-375 the chain is on the cytoplasmic side; it reads SNLRTFLWIRVQQFTSRGVELRLFSHLHELSLRWHLGRRTGEVLRIVDR. The helical transmembrane segment at 376-396 threads the bilayer; it reads GTSSVTGLLSYLVFNIIPTLA. Residue D397 is a topological domain, lumenal. A helical transmembrane segment spans residues 398–418; it reads IIIGIIYFSMFFNAWFGLIVF. Residues 419 to 499 lie on the Cytoplasmic side of the membrane; that stretch reads LCMSLYLILT…STASLVLLNQ (81 aa). The chain crosses the membrane as a helical span at residues 500–520; sequence TQNMVIGFGLLAGSLLCAYFV. Topologically, residues 521-529 are lumenal; it reads SERRLQVGD. Residues 530 to 550 form a helical membrane-spanning segment; sequence FVLFGTYITQLYMPLNWFGTY. Residues 551 to 836 are Cytoplasmic-facing; sequence YRMIQTNFID…QGQETVPEDS (286 aa). Positions 590 to 824 constitute an ABC transporter domain; sequence VEFENVHFSY…GGVYAEMWQL (235 aa). Residues Y599 and 623-634 contribute to the ATP site; that span reads GPSGAGKSTILR.

It belongs to the ABC transporter superfamily. ABCB family. Heavy Metal importer (TC 3.A.1.210) subfamily. In terms of assembly, homodimer. In terms of processing, N-glycosylated. In terms of tissue distribution, ubiquitously expressed. Highly expressed in testis by meiotic pachytene spermatocytes and post-meiotic early spermatids.

The protein resides in the cell membrane. It localises to the mitochondrion outer membrane. Its subcellular location is the endoplasmic reticulum membrane. It is found in the golgi apparatus membrane. The protein localises to the endosome membrane. The protein resides in the lysosome membrane. It localises to the late endosome membrane. Its subcellular location is the early endosome membrane. It is found in the secreted. The protein localises to the extracellular exosome. The protein resides in the mitochondrion. It localises to the endosome. Its subcellular location is the multivesicular body membrane. It is found in the melanosome membrane. It carries out the reaction heme b(in) + ATP + H2O = heme b(out) + ADP + phosphate + H(+). It catalyses the reaction coproporphyrin III(in) + ATP + H2O = coproporphyrin III(out) + ADP + phosphate + H(+). The enzyme catalyses pheophorbide a(in) + ATP + H2O = pheophorbide a(out) + ADP + phosphate + H(+). The catalysed reaction is coproporphyrinogen III(in) + ATP + H2O = coproporphyrinogen III(out) + ADP + phosphate + H(+). It carries out the reaction protoporphyrin IX(in) + ATP + H2O = protoporphyrin IX(out) + ADP + phosphate + H(+). It catalyses the reaction coproporphyrin I(in) + ATP + H2O = coproporphyrin I(out) + ADP + phosphate + H(+). The enzyme catalyses uroporphyrin I(in) + ATP + H2O = uroporphyrin I(out) + ADP + phosphate + H(+). The catalysed reaction is uroporphyrin III(in) + ATP + H2O = uroporphyrin III(out) + ADP + phosphate + H(+). Functionally, ATP-dependent transporter that catalyzes the transport of a broad-spectrum of porphyrins from the cytoplasm to the extracellular space through the plasma membrane or into the vesicle lumen. May also function as an ATP-dependent importer of porphyrins from the cytoplasm into the mitochondria, in turn may participate in the de novo heme biosynthesis regulation and in the coordination of heme and iron homeostasis during phenylhydrazine stress. May play a key role in the early steps of melanogenesis producing PMEL amyloid fibrils. In vitro, it confers to cells a resistance to toxic metal such as arsenic and cadmium and against chemotherapeutics agent such as 5-fluorouracil, SN-38 and vincristin. In addition may play a role in the transition metal homeostasis. The chain is ATP-binding cassette sub-family B member 6 from Rattus norvegicus (Rat).